The primary structure comprises 123 residues: UPF0102 protein MCA0184 (123 aa).

Belongs to the UPF0102 family.

The polypeptide is UPF0102 protein MCA0184 (Methylococcus capsulatus (strain ATCC 33009 / NCIMB 11132 / Bath)).